Reading from the N-terminus, the 558-residue chain is MALNKSMHARNRYKDKPPDFAYLAGKYPEFRQHVQTTLAGRVSLNFKDPEAVRALTCTLLKEDFGLTIDIPLERLIPTVPLRLNYIHWVEDLIGHQDADKRVLRRGIDIGTGASCIYPLLGSTLNGWYFLATEVDDMCFNYAKKNVEQNNLSDLIKVVKVPQKTLLMDALKEESEIIYDFCMCNPPFFANQLEAKGVNSRNPRRPPPSSVNTGGITEIMAEGGELEFVKRIIHDSLQLKKRLRWYSCMLGKKCSLAPLKEELKIQGVPKVTHTEFCQGRTMRWALAWSFYDDVQVPSPPSKRRKLEKPRKPITFTVLASTVKELSIKAAAMGWDAVEGIAVVRAWIEKILADLKVQHKRVPCGKDEVSLFVTAIENSWVHLRRKKRERVRQLRELPRASDDVLQAMEEEKNSQNSVSNSVDCEKSKTEDSETELVAPDEDVHLTADDELREESATKELSEHMEEEETEAKQTEASFNEGSSSAEQGAQPSEEAGNLTAEKGQSPKETSRCFLFKCLMNVKKEGNDVLVEMHWVEGQNRDLMNQLCTYLRNQVLRLVAS.

An RNA-binding region spans residues 17–20 (PPDF). Residues Arg-82, Gly-110, Ser-114, Glu-133, Thr-164, and Asn-184 each contribute to the S-adenosyl-L-methionine site. Residues 163–167 (KTLLM) are K-loop. RNA-binding stretches follow at residues 199-211 (SRNP…SSVN), 250-254 (GKKCS), and 277-283 (QGRTMRW). Positions 289–400 (FYDDVQVPSP…QLRELPRASD (112 aa)) are VCR 1. The segment at 407 to 502 (EEEKNSQNSV…AGNLTAEKGQ (96 aa)) is disordered. Positions 439–461 (EDVHLTADDELREESATKELSEH) are enriched in basic and acidic residues. Residues 477–488 (NEGSSSAEQGAQ) show a composition bias toward polar residues. The VCR 2 stretch occupies residues 511-558 (FLFKCLMNVKKEGNDVLVEMHWVEGQNRDLMNQLCTYLRNQVLRLVAS).

The protein belongs to the methyltransferase superfamily. METTL16/RlmF family.

The protein localises to the nucleus. Its subcellular location is the cytoplasm. The catalysed reaction is adenosine in U6 snRNA + S-adenosyl-L-methionine = N(6)-methyladenosine in U6 snRNA + S-adenosyl-L-homocysteine + H(+). The enzyme catalyses an adenosine in mRNA + S-adenosyl-L-methionine = an N(6)-methyladenosine in mRNA + S-adenosyl-L-homocysteine + H(+). Methyltransferase activity is autoinhibited by the K-loop region that blocks S-adenosyl-L-methionine-binding. Upon activation, K-loop changes conformation, allowing S-adenosyl-L-methionine-binding and subsequent methyltransferase activity. mRNA N6-adenosine-methyltransferase activity is inhibited by zinc. Functionally, RNA N6-methyltransferase that methylates adenosine residues at the N(6) position of a subset of RNAs and is involved in S-adenosyl-L-methionine homeostasis by regulating expression of MAT2A transcripts. Able to N6-methylate a subset of mRNAs and U6 small nuclear RNAs (U6 snRNAs). In contrast to the METTL3-METTL14 heterodimer, only able to methylate a limited number of RNAs: requires both a 5'UACAGAGAA-3' nonamer sequence and a specific RNA structure. Plays a key role in S-adenosyl-L-methionine homeostasis by mediating N6-methylation of MAT2A mRNAs, altering splicing of MAT2A transcripts: in presence of S-adenosyl-L-methionine, binds the 3'-UTR region of MAT2A mRNA and specifically N6-methylates the first hairpin of MAT2A mRNA, impairing MAT2A splicing and protein expression. In S-adenosyl-L-methionine-limiting conditions, binds the 3'-UTR region of MAT2A mRNA but stalls due to the lack of a methyl donor, preventing N6-methylation and promoting expression of MAT2A. In addition to mRNAs, also able to mediate N6-methylation of U6 small nuclear RNA (U6 snRNA): specifically N6-methylates adenine in position 43 of U6 snRNAs. This is RNA N(6)-adenosine-methyltransferase METTL16 (METTL16) from Gallus gallus (Chicken).